Consider the following 356-residue polypeptide: Uroporphyrinogen decarboxylase (356 aa).

Substrate-binding positions include Arg27 to Arg31, Asp77, Tyr154, Thr209, and His327.

Belongs to the uroporphyrinogen decarboxylase family. Homodimer.

Its subcellular location is the cytoplasm. It catalyses the reaction uroporphyrinogen III + 4 H(+) = coproporphyrinogen III + 4 CO2. Its pathway is porphyrin-containing compound metabolism; protoporphyrin-IX biosynthesis; coproporphyrinogen-III from 5-aminolevulinate: step 4/4. Functionally, catalyzes the decarboxylation of four acetate groups of uroporphyrinogen-III to yield coproporphyrinogen-III. In Hamiltonella defensa subsp. Acyrthosiphon pisum (strain 5AT), this protein is Uroporphyrinogen decarboxylase.